The chain runs to 448 residues: Histidine--tRNA ligase (448 aa).

The protein belongs to the class-II aminoacyl-tRNA synthetase family. Homodimer.

It localises to the cytoplasm. The catalysed reaction is tRNA(His) + L-histidine + ATP = L-histidyl-tRNA(His) + AMP + diphosphate + H(+). The chain is Histidine--tRNA ligase from Treponema denticola (strain ATCC 35405 / DSM 14222 / CIP 103919 / JCM 8153 / KCTC 15104).